A 255-amino-acid chain; its full sequence is 5'-nucleotidase SurE (255 aa).

Residues Asp-8, Asp-9, Ser-40, and Asn-93 each coordinate a divalent metal cation.

It belongs to the SurE nucleotidase family. A divalent metal cation serves as cofactor.

It is found in the cytoplasm. The catalysed reaction is a ribonucleoside 5'-phosphate + H2O = a ribonucleoside + phosphate. Functionally, nucleotidase that shows phosphatase activity on nucleoside 5'-monophosphates. The sequence is that of 5'-nucleotidase SurE from Nitrobacter hamburgensis (strain DSM 10229 / NCIMB 13809 / X14).